A 94-amino-acid polypeptide reads, in one-letter code: Large ribosomal subunit protein bL27 (94 aa).

A propeptide spanning residues 1–9 is cleaved from the precursor; it reads MLKLNLQFF.

It belongs to the bacterial ribosomal protein bL27 family. In terms of processing, the N-terminus is cleaved by ribosomal processing cysteine protease Prp.

This is Large ribosomal subunit protein bL27 from Staphylococcus aureus (strain Mu3 / ATCC 700698).